The following is a 621-amino-acid chain: ATP-dependent lipid A-core flippase (621 aa).

5 consecutive transmembrane segments (helical) span residues 32–52, 91–111, 192–212, 286–306, and 312–332; these read IVAA…LAAF, VWGT…LVVI, IVLL…FPLL, SPFS…IALW, and YTTI…YAPI. An ABC transmembrane type-1 domain is found at 33-344; that stretch reads VAALIAIFGV…LANISIPMQT (312 aa). Residues 378–611 enclose the ABC transporter domain; that stretch reads FRNVDVEYRS…NGYYTMLRNI (234 aa). An ATP-binding site is contributed by 410–417; sequence GRSGSGKS.

The protein belongs to the ABC transporter superfamily. Lipid exporter (TC 3.A.1.106) family. In terms of assembly, homodimer.

It localises to the cell inner membrane. It carries out the reaction ATP + H2O + lipid A-core oligosaccharideSide 1 = ADP + phosphate + lipid A-core oligosaccharideSide 2.. In terms of biological role, involved in lipopolysaccharide (LPS) biosynthesis. Translocates lipid A-core from the inner to the outer leaflet of the inner membrane. Transmembrane domains (TMD) form a pore in the inner membrane and the ATP-binding domain (NBD) is responsible for energy generation. This is ATP-dependent lipid A-core flippase from Neisseria meningitidis serogroup A / serotype 4A (strain DSM 15465 / Z2491).